The chain runs to 313 residues: Hydroxyacylglutathione hydrolase, mitochondrial (313 aa).

Zn(2+) is bound by residues H107, H109, D111, H112, H163, and D187. Substrate is bound by residues 196–198 (KFF) and 226–228 (HEY). A Zn(2+)-binding site is contributed by H226. 2 stretches are compositionally biased toward basic and acidic residues: residues 285 to 294 (VQEHAGERDP) and 301 to 313 (IRKE…VPKD). A disordered region spans residues 285–313 (VQEHAGERDPISTMGAIRKEKDHFKVPKD). 302-305 (RKEK) is a binding site for substrate.

Belongs to the metallo-beta-lactamase superfamily. Glyoxalase II family. Monomer. The cofactor is Zn(2+).

It is found in the mitochondrion matrix. It localises to the cytoplasm. The catalysed reaction is an S-(2-hydroxyacyl)glutathione + H2O = a 2-hydroxy carboxylate + glutathione + H(+). It carries out the reaction (R)-S-lactoylglutathione + H2O = (R)-lactate + glutathione + H(+). Its function is as follows. Thiolesterase that catalyzes the hydrolysis of S-D-lactoyl-glutathione to form glutathione and D-lactic acid. The polypeptide is Hydroxyacylglutathione hydrolase, mitochondrial (hagh) (Xenopus tropicalis (Western clawed frog)).